A 319-amino-acid chain; its full sequence is Ribosomal RNA large subunit methyltransferase F (319 aa).

The segment at 1 to 25 is disordered; the sequence is MAPFFSAMTSKKQSQGLPKGPHPDN. The segment covering 7 to 16 has biased composition (polar residues); the sequence is AMTSKKQSQG.

It belongs to the methyltransferase superfamily. METTL16/RlmF family.

The protein resides in the cytoplasm. It carries out the reaction adenosine(1618) in 23S rRNA + S-adenosyl-L-methionine = N(6)-methyladenosine(1618) in 23S rRNA + S-adenosyl-L-homocysteine + H(+). In terms of biological role, specifically methylates the adenine in position 1618 of 23S rRNA. This is Ribosomal RNA large subunit methyltransferase F from Shewanella amazonensis (strain ATCC BAA-1098 / SB2B).